Reading from the N-terminus, the 399-residue chain is MMVHCAGCERPILDRFLLNVLDRAWHAKCVQCCECNCNLTEKCFSRDGKLYCKIDFFRRFGTKCAGCLQGISPSDLVRRARSKVFHLNCFTCMVCNKQLSTGEELYVIDENKFVCKEDYLSASAIKEVNLNSVSSCTDRSLSPDLPDQIQDDTKETDNSTSSDKDTNNNENEEQNSCTKRRGPRTTIKAKQLETLKAAFVATPKPTRHIREQLAQETGLNMRVIQVWFQNRRSKERRMKQLSALGARRHAFFRGPRRMRPLGGRLEDPDIMGPGGYSYYGEYQGDYYGPVVNYDFFPHGPPSSQAHSPAESPYLLSSGSGALEGGPVSAHHPSDDQRFTDMISHADTPSPEPGMTGPLHSNPQGEGGFTGSPPFPLANNTSYSGPMSHPGQEMGENTVW.

2 LIM zinc-binding domains span residues 3-61 (VHCA…RRFG) and 62-125 (TKCA…ASAI). Disordered regions lie at residues 136–185 (CTDR…GPRT) and 301–399 (PSSQ…NTVW). Residues 151–167 (DDTKETDNSTSSDKDTN) show a composition bias toward basic and acidic residues. Residues 180–239 (RRGPRTTIKAKQLETLKAAFVATPKPTRHIREQLAQETGLNMRVIQVWFQNRRSKERRMK) constitute a DNA-binding region (homeobox).

The protein localises to the nucleus. Its function is as follows. Probably involved in the patterning of the nervous system, in particular in the early specification of the diencephalon. The sequence is that of LIM/homeobox protein Lhx5 (lhx5) from Danio rerio (Zebrafish).